The following is a 367-amino-acid chain: Isocitrate dehydrogenase [NAD] regulatory subunit 1, mitochondrial (367 aa).

Residues 1–25 constitute a mitochondrion transit peptide; sequence MSRRSLTLLKNLARNANGSGIQTRS.

The protein belongs to the isocitrate and isopropylmalate dehydrogenases family. In terms of assembly, heterooligomer of catalytic and regulatory subunits. As to expression, ubiquitous. Predominantly expressed in roots, stems and leaves.

The protein resides in the mitochondrion. Performs an essential role in the oxidative function of the citric acid cycle. The chain is Isocitrate dehydrogenase [NAD] regulatory subunit 1, mitochondrial (IDH1) from Arabidopsis thaliana (Mouse-ear cress).